We begin with the raw amino-acid sequence, 304 residues long: Ornithine carbamoyltransferase (304 aa).

Carbamoyl phosphate is bound by residues 53–56, Q80, R104, and 131–134; these read STRT and HPCQ. L-ornithine contacts are provided by residues N162, D219, and 223 to 224; that span reads SM. Residues 259 to 260 and R287 contribute to the carbamoyl phosphate site; that span reads CL.

Belongs to the aspartate/ornithine carbamoyltransferase superfamily. OTCase family.

The protein resides in the cytoplasm. The catalysed reaction is carbamoyl phosphate + L-ornithine = L-citrulline + phosphate + H(+). The protein operates within amino-acid biosynthesis; L-arginine biosynthesis; L-arginine from L-ornithine and carbamoyl phosphate: step 1/3. In terms of biological role, reversibly catalyzes the transfer of the carbamoyl group from carbamoyl phosphate (CP) to the N(epsilon) atom of ornithine (ORN) to produce L-citrulline. The protein is Ornithine carbamoyltransferase of Herminiimonas arsenicoxydans.